A 1034-amino-acid chain; its full sequence is Phosphoenolpyruvate carboxylase (1034 aa).

Active-site residues include His-203 and Lys-680.

It belongs to the PEPCase type 1 family. Requires Mg(2+) as cofactor.

The enzyme catalyses oxaloacetate + phosphate = phosphoenolpyruvate + hydrogencarbonate. Forms oxaloacetate, a four-carbon dicarboxylic acid source for the tricarboxylic acid cycle. This Synechocystis sp. (strain ATCC 27184 / PCC 6803 / Kazusa) protein is Phosphoenolpyruvate carboxylase (ppc).